Consider the following 443-residue polypeptide: ATP-dependent protease ATPase subunit HslU (443 aa).

ATP is bound by residues isoleucine 18 and 60–65 (GVGKTE). The tract at residues 138–158 (PAENQWGEKEQNEDKGTRQTF) is disordered. The segment covering 143 to 154 (WGEKEQNEDKGT) has biased composition (basic and acidic residues). ATP is bound by residues aspartate 255, glutamate 321, and arginine 393.

The protein belongs to the ClpX chaperone family. HslU subfamily. As to quaternary structure, a double ring-shaped homohexamer of HslV is capped on each side by a ring-shaped HslU homohexamer. The assembly of the HslU/HslV complex is dependent on binding of ATP.

Its subcellular location is the cytoplasm. In terms of biological role, ATPase subunit of a proteasome-like degradation complex; this subunit has chaperone activity. The binding of ATP and its subsequent hydrolysis by HslU are essential for unfolding of protein substrates subsequently hydrolyzed by HslV. HslU recognizes the N-terminal part of its protein substrates and unfolds these before they are guided to HslV for hydrolysis. The sequence is that of ATP-dependent protease ATPase subunit HslU from Pseudoalteromonas atlantica (strain T6c / ATCC BAA-1087).